The sequence spans 215 residues: UPF0319 protein VVA1446 (215 aa).

Positions 1 to 21 (MNIIKPLTCILAMSISGLATA) are cleaved as a signal peptide.

The protein belongs to the UPF0319 family.

The chain is UPF0319 protein VVA1446 from Vibrio vulnificus (strain YJ016).